The sequence spans 26 residues: Beta-hexosaminidase (26 aa).

Glycosylated. In terms of tissue distribution, detected in dry seeds and cotyledons.

It carries out the reaction Hydrolysis of terminal non-reducing N-acetyl-D-hexosamine residues in N-acetyl-beta-D-hexosaminides.. Inhibited by AgNO(3) at a concentration of 0.1 mM. Strongly inhibited by CdCl(2), ZnCl(2) and FeCl(3) and moderately by CoCl(2), CuSO(4) and NiCl(2) at 10 mM concentration. CaCl(2), MgCl(2), MnSO(4) and KI also have a slight inhibitory effect of 20%-25% at 10 mM concentration. Activated to a small extent by MgCl(2) at 0.1 mM concentration but inhibited with increasing concentration. Not affected by carbohydrates such as fucose, galactose and glucose but displays a slight decrease in activity up to 25% with lactose, alpha-mannose and N-acetyl-galactosamine (GalNAc). Functionally, has hexosaminidase activity. Active with both p-nitrophenyl-beta-D-N-acetylglucosamine (pNP-GlcNAc) and p-nitrophenyl-beta-D-N-acetylgalactosamine (pNP-GalNAc). Not active toward p-nitrophenyl-beta-D-N,N'-diacetylchitobiose (pNP-(GlcNAc)2) or p-nitrophenyl-beta-D-N,N',N''-triacetylchitobiose (pNP-(GlcNAc)3). Removes terminal GlcNAc and may be involved in storage protein degradation. The sequence is that of Beta-hexosaminidase from Lupinus albus (White lupine).